The sequence spans 142 residues: MAAMTVQLDIVSAEGGIYSGRVSHLQVTGSEGELGIMHGHAPLISKIKPGMARVTKQDGSEEVFYLSGGILEVQPASTSILADVVLRADDIDEKAAIEAKNRAEAHMVDAGSDFDYQAALIEIAKATAQLRVLETIKKNIAR.

This sequence belongs to the ATPase epsilon chain family. F-type ATPases have 2 components, CF(1) - the catalytic core - and CF(0) - the membrane proton channel. CF(1) has five subunits: alpha(3), beta(3), gamma(1), delta(1), epsilon(1). CF(0) has three main subunits: a, b and c.

The protein resides in the cell inner membrane. Produces ATP from ADP in the presence of a proton gradient across the membrane. The sequence is that of ATP synthase epsilon chain from Shewanella denitrificans (strain OS217 / ATCC BAA-1090 / DSM 15013).